A 179-amino-acid chain; its full sequence is Macro domain-containing protein XAC3343 (179 aa).

The region spanning 1–175 (MRIEVWQGDI…AYQQALATQE (175 aa)) is the Macro domain.

It belongs to the MacroD-type family.

This chain is Macro domain-containing protein XAC3343, found in Xanthomonas axonopodis pv. citri (strain 306).